A 177-amino-acid chain; its full sequence is Large ribosomal subunit protein uL6 (177 aa).

The protein belongs to the universal ribosomal protein uL6 family. As to quaternary structure, part of the 50S ribosomal subunit.

Functionally, this protein binds to the 23S rRNA, and is important in its secondary structure. It is located near the subunit interface in the base of the L7/L12 stalk, and near the tRNA binding site of the peptidyltransferase center. The sequence is that of Large ribosomal subunit protein uL6 from Cereibacter sphaeroides (strain ATCC 17029 / ATH 2.4.9) (Rhodobacter sphaeroides).